Reading from the N-terminus, the 287-residue chain is MTQKEIWYETLHANFGQYFSVENVLYREKTEHQDLVIFENPVLGRVMALDGVVQTTERDEFIYHEMMTHVPLLAHGQAKKVLIIGGGDGAMLREVSRHQGVEQITMVEIDAGVVEFCRQYLPNHNAGAYDDPRFKLVIDDGVNFVNQTDEKFDVIISDCTDPIGPGESLFTSAFYEGCARCLNEGGIFVAQNGVCFLQQDEAVNSHTRLSQYFKDVSFYQAAIPTYYGGIMTFAWASQDPALRQLDLTTLQHRFHQSGLNCRYYNPAIHAGSFALPQYLLDALNVSR.

One can recognise a PABS domain in the interval 5-238 (EIWYETLHAN…GIMTFAWASQ (234 aa)). Glutamine 33 serves as a coordination point for S-methyl-5'-thioadenosine. Positions 64 and 88 each coordinate spermidine. S-methyl-5'-thioadenosine-binding positions include glutamate 108 and 140 to 141 (DG). Residue aspartate 158 is the Proton acceptor of the active site. Residue 158-161 (DCTD) coordinates spermidine. Proline 165 contributes to the S-methyl-5'-thioadenosine binding site.

It belongs to the spermidine/spermine synthase family. As to quaternary structure, homodimer or homotetramer.

Its subcellular location is the cytoplasm. The enzyme catalyses S-adenosyl 3-(methylsulfanyl)propylamine + putrescine = S-methyl-5'-thioadenosine + spermidine + H(+). It participates in amine and polyamine biosynthesis; spermidine biosynthesis; spermidine from putrescine: step 1/1. Its function is as follows. Catalyzes the irreversible transfer of a propylamine group from the amino donor S-adenosylmethioninamine (decarboxy-AdoMet) to putrescine (1,4-diaminobutane) to yield spermidine. The sequence is that of Polyamine aminopropyltransferase from Serratia proteamaculans (strain 568).